Here is an 88-residue protein sequence, read N- to C-terminus: Small ribosomal subunit protein bS20 (88 aa).

This sequence belongs to the bacterial ribosomal protein bS20 family.

Its function is as follows. Binds directly to 16S ribosomal RNA. This is Small ribosomal subunit protein bS20 from Chelativorans sp. (strain BNC1).